A 367-amino-acid chain; its full sequence is tRNA pseudouridine synthase D (367 aa).

Asp-78 functions as the Nucleophile in the catalytic mechanism. One can recognise a TRUD domain in the interval 153-300; the sequence is GVPNYFGEQR…KQERRRIRLT (148 aa).

This sequence belongs to the pseudouridine synthase TruD family.

The catalysed reaction is uridine(13) in tRNA = pseudouridine(13) in tRNA. Its function is as follows. Responsible for synthesis of pseudouridine from uracil-13 in transfer RNAs. The chain is tRNA pseudouridine synthase D from Colwellia psychrerythraea (strain 34H / ATCC BAA-681) (Vibrio psychroerythus).